Here is a 436-residue protein sequence, read N- to C-terminus: Hydrogenobyrinate a,c-diamide synthase (436 aa).

The 192-residue stretch at 244–435 (RIAVARDDAF…MHVIDFSGEA (192 aa)) folds into the GATase cobBQ-type domain. Cysteine 327 acts as the Nucleophile in catalysis.

It belongs to the CobB/CbiA family. The cofactor is Mg(2+).

The enzyme catalyses hydrogenobyrinate + 2 L-glutamine + 2 ATP + 2 H2O = hydrogenobyrinate a,c-diamide + 2 L-glutamate + 2 ADP + 2 phosphate + 2 H(+). Its pathway is cofactor biosynthesis; adenosylcobalamin biosynthesis; cob(II)yrinate a,c-diamide from precorrin-2 (aerobic route): step 9/10. Functionally, catalyzes the ATP-dependent amidation of the two carboxylate groups at positions a and c of hydrogenobyrinate, using either L-glutamine or ammonia as the nitrogen source. This Brucella abortus biovar 1 (strain 9-941) protein is Hydrogenobyrinate a,c-diamide synthase.